We begin with the raw amino-acid sequence, 205 residues long: Ribosomal RNA small subunit methyltransferase G (205 aa).

Residues Gly66, Phe71, 119–120, and Arg135 contribute to the S-adenosyl-L-methionine site; that span reads IE.

This sequence belongs to the methyltransferase superfamily. RNA methyltransferase RsmG family.

It localises to the cytoplasm. It catalyses the reaction guanosine(527) in 16S rRNA + S-adenosyl-L-methionine = N(7)-methylguanosine(527) in 16S rRNA + S-adenosyl-L-homocysteine. Its function is as follows. Specifically methylates the N7 position of guanine in position 527 of 16S rRNA. The protein is Ribosomal RNA small subunit methyltransferase G of Rhizobium etli (strain CIAT 652).